The chain runs to 1244 residues: Alpha-protein kinase 1 (1244 aa).

ADP-D-glycero-beta-D-manno-heptose contacts are provided by residues Phe61, Gln67, Arg116, 150-153 (RQAR), Asp231, Lys233, 236-237 (ST), and Phe295. 4 disordered regions span residues 650 to 675 (LQEP…TPFS), 701 to 737 (VRNM…THPS), 757 to 798 (VKDR…TEDA), and 824 to 848 (NWPV…DPDA). Residues 652-675 (EPNNDNLEPSQNQPQQQMPLTPFS) show a composition bias toward polar residues. The span at 713–726 (SRPSYRSASWSSDS) shows a compositional bias: low complexity. Residues 757-771 (VKDRQGKEQGEEISE) are compositionally biased toward basic and acidic residues. A compositionally biased stretch (acidic residues) spans 787–798 (PEGETAESTEDA). In terms of domain architecture, Alpha-type protein kinase spans 1017–1237 (KYSKKSELWT…ICHRLSLTRP (221 aa)).

It belongs to the protein kinase superfamily. Alpha-type protein kinase family. ALPK subfamily. In terms of tissue distribution, highly expressed in liver. Expressed in the optic nerve and retinal pigmented epithelium. Lower expression is observed in the macula and extramacular retina.

It localises to the cytoplasm. The protein localises to the cytosol. The protein resides in the cytoskeleton. Its subcellular location is the spindle pole. It is found in the microtubule organizing center. It localises to the centrosome. The protein localises to the cell projection. The protein resides in the cilium. It catalyses the reaction L-seryl-[protein] + ATP = O-phospho-L-seryl-[protein] + ADP + H(+). The enzyme catalyses L-threonyl-[protein] + ATP = O-phospho-L-threonyl-[protein] + ADP + H(+). Its activity is regulated as follows. Serine/threonine-protein kinase activity is stimulated upon ADP-D-glycero-beta-D-manno-heptose (ADP-Heptose)-binding. Its function is as follows. Serine/threonine-protein kinase that detects bacterial pathogen-associated molecular pattern metabolites (PAMPs) and initiates an innate immune response, a critical step for pathogen elimination and engagement of adaptive immunity. Specifically recognizes and binds ADP-D-glycero-beta-D-manno-heptose (ADP-Heptose), a potent PAMP present in all Gram-negative and some Gram-positive bacteria. ADP-Heptose-binding stimulates its kinase activity to phosphorylate and activate TIFA, triggering pro-inflammatory NF-kappa-B signaling. May be involved in monosodium urate monohydrate (MSU)-induced inflammation by mediating phosphorylation of unconventional myosin MYO9A. May also play a role in apical protein transport by mediating phosphorylation of unconventional myosin MYO1A. May play a role in ciliogenesis. The sequence is that of Alpha-protein kinase 1 from Homo sapiens (Human).